A 454-amino-acid chain; its full sequence is Serine/threonine-protein phosphatase C23G10.1 (454 aa).

Residues aspartate 196, histidine 198, aspartate 224, and asparagine 256 each coordinate Mn(2+). Histidine 257 (proton donor) is an active-site residue. Residues histidine 308 and histidine 382 each contribute to the Mn(2+) site.

This sequence belongs to the PPP phosphatase family. PP-1 subfamily. The cofactor is Mn(2+).

The enzyme catalyses O-phospho-L-seryl-[protein] + H2O = L-seryl-[protein] + phosphate. It carries out the reaction O-phospho-L-threonyl-[protein] + H2O = L-threonyl-[protein] + phosphate. The polypeptide is Serine/threonine-protein phosphatase C23G10.1 (Caenorhabditis elegans).